A 163-amino-acid polypeptide reads, in one-letter code: Nucleotide-binding protein APL_1231 (163 aa).

This sequence belongs to the YajQ family.

Functionally, nucleotide-binding protein. The protein is Nucleotide-binding protein APL_1231 of Actinobacillus pleuropneumoniae serotype 5b (strain L20).